The following is a 118-amino-acid chain: Large ribosomal subunit protein bL20 (118 aa).

Belongs to the bacterial ribosomal protein bL20 family.

Its function is as follows. Binds directly to 23S ribosomal RNA and is necessary for the in vitro assembly process of the 50S ribosomal subunit. It is not involved in the protein synthesizing functions of that subunit. The chain is Large ribosomal subunit protein bL20 from Thermosipho africanus (strain TCF52B).